Here is a 505-residue protein sequence, read N- to C-terminus: uncharacterized protein (505 aa).

The helical transmembrane segment at 11–27 (IGIIGGGIVGWLAAIAL) threads the bilayer.

The protein localises to the membrane. This is an uncharacterized protein from Sinorhizobium fredii (strain NBRC 101917 / NGR234).